Consider the following 94-residue polypeptide: Large ribosomal subunit protein bL25 (94 aa).

The protein belongs to the bacterial ribosomal protein bL25 family. In terms of assembly, part of the 50S ribosomal subunit; part of the 5S rRNA/L5/L18/L25 subcomplex. Contacts the 5S rRNA. Binds to the 5S rRNA independently of L5 and L18.

This is one of the proteins that binds to the 5S RNA in the ribosome where it forms part of the central protuberance. In Salmonella agona (strain SL483), this protein is Large ribosomal subunit protein bL25.